The primary structure comprises 119 residues: Large ribosomal subunit protein bL20 (119 aa).

Belongs to the bacterial ribosomal protein bL20 family.

Binds directly to 23S ribosomal RNA and is necessary for the in vitro assembly process of the 50S ribosomal subunit. It is not involved in the protein synthesizing functions of that subunit. The chain is Large ribosomal subunit protein bL20 from Aromatoleum aromaticum (strain DSM 19018 / LMG 30748 / EbN1) (Azoarcus sp. (strain EbN1)).